The primary structure comprises 122 residues: Large ribosomal subunit protein uL14 (122 aa).

Belongs to the universal ribosomal protein uL14 family. In terms of assembly, part of the 50S ribosomal subunit. Forms a cluster with proteins L3 and L19. In the 70S ribosome, L14 and L19 interact and together make contacts with the 16S rRNA in bridges B5 and B8.

Its function is as follows. Binds to 23S rRNA. Forms part of two intersubunit bridges in the 70S ribosome. In Rhodopseudomonas palustris (strain HaA2), this protein is Large ribosomal subunit protein uL14.